A 107-amino-acid polypeptide reads, in one-letter code: uncharacterized protein (107 aa).

This is an uncharacterized protein from Acidianus bottle-shaped virus (isolate Italy/Pozzuoli) (ABV).